We begin with the raw amino-acid sequence, 545 residues long: CTP synthase (545 aa).

The tract at residues 1–266 (MKTNYIFVTG…DDYICKRFSL (266 aa)) is amidoligase domain. Ser-14 provides a ligand contact to CTP. UTP is bound at residue Ser-14. ATP-binding positions include 15 to 20 (SLGKGI) and Asp-72. Mg(2+) contacts are provided by Asp-72 and Glu-140. CTP is bound by residues 147 to 149 (DIE), 187 to 192 (KTKPTQ), and Lys-223. UTP contacts are provided by residues 187-192 (KTKPTQ) and Lys-223. Residue 239 to 241 (KDV) participates in ATP binding. Residues 291–542 (TIGMVGKYVE…VKAAGKYQKG (252 aa)) form the Glutamine amidotransferase type-1 domain. Gly-352 serves as a coordination point for L-glutamine. Cys-379 serves as the catalytic Nucleophile; for glutamine hydrolysis. L-glutamine-binding positions include 380–383 (LGMQ), Glu-403, and Arg-470. Residues His-515 and Glu-517 contribute to the active site.

This sequence belongs to the CTP synthase family. In terms of assembly, homotetramer.

The enzyme catalyses UTP + L-glutamine + ATP + H2O = CTP + L-glutamate + ADP + phosphate + 2 H(+). The catalysed reaction is L-glutamine + H2O = L-glutamate + NH4(+). It catalyses the reaction UTP + NH4(+) + ATP = CTP + ADP + phosphate + 2 H(+). The protein operates within pyrimidine metabolism; CTP biosynthesis via de novo pathway; CTP from UDP: step 2/2. Allosterically activated by GTP, when glutamine is the substrate; GTP has no effect on the reaction when ammonia is the substrate. The allosteric effector GTP functions by stabilizing the protein conformation that binds the tetrahedral intermediate(s) formed during glutamine hydrolysis. Inhibited by the product CTP, via allosteric rather than competitive inhibition. Its function is as follows. Catalyzes the ATP-dependent amination of UTP to CTP with either L-glutamine or ammonia as the source of nitrogen. Regulates intracellular CTP levels through interactions with the four ribonucleotide triphosphates. This Photorhabdus laumondii subsp. laumondii (strain DSM 15139 / CIP 105565 / TT01) (Photorhabdus luminescens subsp. laumondii) protein is CTP synthase.